A 199-amino-acid chain; its full sequence is Calcium-binding protein CAST (199 aa).

Over residues 1-13 (MGSVQDENKDEFK) the composition is skewed to basic and acidic residues. A disordered region spans residues 1-31 (MGSVQDENKDEFKQSLTRGKLKPSSSSSFRL). 4 consecutive EF-hand domains span residues 36–71 (LNSI…LGLD), 75–110 (SEIE…VFFG), 125–160 (QDES…LGLP), and 163–198 (SEID…VIVP). The Ca(2+) site is built by D49, N51, D53, and E60. Ca(2+) is bound by residues D138, N140, D142, E149, D178, D180, R182, and E187.

In terms of biological role, not known. Probably binds 3 calcium ions. The protein is Calcium-binding protein CAST of Solanum tuberosum (Potato).